The chain runs to 64 residues: Large ribosomal subunit protein bL35 (64 aa).

Over residues 1-15 (MPKQKSHSGASKRFR) the composition is skewed to basic residues. Residues 1 to 22 (MPKQKSHSGASKRFRVTGSGKV) are disordered.

This sequence belongs to the bacterial ribosomal protein bL35 family.

The chain is Large ribosomal subunit protein bL35 from Frankia casuarinae (strain DSM 45818 / CECT 9043 / HFP020203 / CcI3).